The chain runs to 562 residues: Putative transport protein ETA_21820 (562 aa).

5 helical membrane-spanning segments follow: residues 8–28 (LLIG…LCLG), 32–52 (LGSV…LLGQ), 66–86 (FMLF…SIFF), 94–114 (MLAI…GKLF), and 158–178 (HLSL…IFGA). RCK C-terminal domains are found at residues 202–288 (LDPD…SFRN) and 290–373 (KEVF…RIGF). The next 6 helical transmembrane spans lie at 383-403 (LLAF…TFQF), 406-426 (FNFG…LGFL), 440-460 (ALTM…GLSA), 473-493 (LLML…CFLF), 503-523 (ALLF…EIIS), and 540-560 (AIAN…WPIL).

This sequence belongs to the AAE transporter (TC 2.A.81) family. YbjL subfamily.

Its subcellular location is the cell membrane. The chain is Putative transport protein ETA_21820 from Erwinia tasmaniensis (strain DSM 17950 / CFBP 7177 / CIP 109463 / NCPPB 4357 / Et1/99).